The primary structure comprises 170 residues: Peptide deformylase-like (170 aa).

The active site involves Glu-139.

It belongs to the polypeptide deformylase family.

In Bradyrhizobium diazoefficiens (strain JCM 10833 / BCRC 13528 / IAM 13628 / NBRC 14792 / USDA 110), this protein is Peptide deformylase-like.